The primary structure comprises 37 residues: Large ribosomal subunit protein bL36 (37 aa).

The protein belongs to the bacterial ribosomal protein bL36 family.

This Heliobacterium modesticaldum (strain ATCC 51547 / Ice1) protein is Large ribosomal subunit protein bL36.